The chain runs to 432 residues: Adhesin YadA (432 aa).

The N-terminal stretch at 1 to 25 (MTKDFKISVSAALISALFSSPYAFA) is a signal peptide. Residues 26–340 (EEPEDGNDGI…KKAISESNQY (315 aa)) form a surface exposed passenger domain region. Positions 242–263 (VNVAQLKKEMAETLENARKETL) form a coiled coil. The outer membrane translocation of the passenger domain stretch occupies residues 341–379 (TDHKFSQLDNRLDKLDKRVDKGLASSAALNSLFQPYGVG). The next 4 beta stranded transmembrane spans lie at 379–389 (GKVNFTAGVGG), 393–404 (SQALAIGSGYRV), 411–417 (KAGVAYA), and 421–432 (NVMYNASFNIEW). The segment at 380-432 (KVNFTAGVGGYRSSQALAIGSGYRVNESVALKAGVAYAGSSNVMYNASFNIEW) is translocator domain.

It belongs to the autotransporter-2 (AT-2) (TC 1.B.40) family. In terms of assembly, homotrimer.

It localises to the cell surface. The protein localises to the cell outer membrane. Functionally, collagen-binding outer membrane protein forming a fibrillar matrix on the bacterial cell surface. Promotes attachment to eukaryotic cells and after invasion, is the major adhesin in infected tissue. Constitutes an alternative uptake pathway under conditions in which invasin synthesis is repressed. The sequence is that of Adhesin YadA (yadA) from Yersinia pseudotuberculosis serotype I (strain IP32953).